Consider the following 234-residue polypeptide: Chalcone--flavanone isomerase 2 (234 aa).

Substrate-binding residues include Thr50, Asn115, and Ser192.

The protein belongs to the chalcone isomerase family.

The enzyme catalyses a chalcone = a flavanone.. It functions in the pathway secondary metabolite biosynthesis; flavonoid biosynthesis. Its function is as follows. Catalyzes the intramolecular cyclization of bicyclic chalcones into tricyclic (S)-flavanones. Responsible for the isomerization of 4,2',4',6'-tetrahydroxychalcone (also termed chalcone) into naringenin. This is Chalcone--flavanone isomerase 2 (CHI2) from Vitis vinifera (Grape).